Reading from the N-terminus, the 148-residue chain is Large ribosomal subunit protein bL9 (148 aa).

The protein belongs to the bacterial ribosomal protein bL9 family.

In terms of biological role, binds to the 23S rRNA. The sequence is that of Large ribosomal subunit protein bL9 from Syntrophotalea carbinolica (strain DSM 2380 / NBRC 103641 / GraBd1) (Pelobacter carbinolicus).